We begin with the raw amino-acid sequence, 276 residues long: MIIEKAKSYGFCFGVKRAVEIAEESQNAVTLGPLIHNPLEIERLAKNYNVKYVETIEDIDENVKRVIVRTHGIPKDKLQNLKEKNVEIIDATCPFVKKPQEIVEEMSKQGYDIVIFGDKNHPEIQGVMSYSVHNRVYVVLDPKELEGIRLKEHIATVAQTTRKINDYLKITNYLIQNYKEVRVFNTICNATFENQDAVRELAKKADIMIIIGGKNSSNTKQLYNIAKEFCEAYLVESEEELKKEWFEGKKHCGISAGASTPEWLVEKIISRIKELA.

Cys-12 serves as a coordination point for [4Fe-4S] cluster. Residues His-36 and His-71 each coordinate (2E)-4-hydroxy-3-methylbut-2-enyl diphosphate. Dimethylallyl diphosphate-binding residues include His-36 and His-71. Isopentenyl diphosphate-binding residues include His-36 and His-71. Position 93 (Cys-93) interacts with [4Fe-4S] cluster. His-121 lines the (2E)-4-hydroxy-3-methylbut-2-enyl diphosphate pocket. His-121 contacts dimethylallyl diphosphate. His-121 lines the isopentenyl diphosphate pocket. Catalysis depends on Glu-123, which acts as the Proton donor. A (2E)-4-hydroxy-3-methylbut-2-enyl diphosphate-binding site is contributed by Thr-160. Cys-188 is a [4Fe-4S] cluster binding site. (2E)-4-hydroxy-3-methylbut-2-enyl diphosphate contacts are provided by Ser-216, Ser-217, Asn-218, and Ser-259. The dimethylallyl diphosphate site is built by Ser-216, Ser-217, Asn-218, and Ser-259. The isopentenyl diphosphate site is built by Ser-216, Ser-217, Asn-218, and Ser-259.

This sequence belongs to the IspH family. [4Fe-4S] cluster is required as a cofactor.

It carries out the reaction isopentenyl diphosphate + 2 oxidized [2Fe-2S]-[ferredoxin] + H2O = (2E)-4-hydroxy-3-methylbut-2-enyl diphosphate + 2 reduced [2Fe-2S]-[ferredoxin] + 2 H(+). The catalysed reaction is dimethylallyl diphosphate + 2 oxidized [2Fe-2S]-[ferredoxin] + H2O = (2E)-4-hydroxy-3-methylbut-2-enyl diphosphate + 2 reduced [2Fe-2S]-[ferredoxin] + 2 H(+). The protein operates within isoprenoid biosynthesis; dimethylallyl diphosphate biosynthesis; dimethylallyl diphosphate from (2E)-4-hydroxy-3-methylbutenyl diphosphate: step 1/1. It participates in isoprenoid biosynthesis; isopentenyl diphosphate biosynthesis via DXP pathway; isopentenyl diphosphate from 1-deoxy-D-xylulose 5-phosphate: step 6/6. In terms of biological role, catalyzes the conversion of 1-hydroxy-2-methyl-2-(E)-butenyl 4-diphosphate (HMBPP) into a mixture of isopentenyl diphosphate (IPP) and dimethylallyl diphosphate (DMAPP). Acts in the terminal step of the DOXP/MEP pathway for isoprenoid precursor biosynthesis. The polypeptide is 4-hydroxy-3-methylbut-2-enyl diphosphate reductase (Nautilia profundicola (strain ATCC BAA-1463 / DSM 18972 / AmH)).